The primary structure comprises 1666 residues: Latent-transforming growth factor beta-binding protein 4 (1666 aa).

Residues 1–24 form the signal peptide; it reads MRRPGLGGPCPLLLLLLLPAATSA. The region spanning 148-180 is the EGF-like 1 domain; that stretch reads ARVLCPLICHNGGVCVKPDRCLCPPDFAGKFCQ. Cystine bridges form between Cys152-Cys162, Cys156-Cys168, Cys170-Cys179, Cys288-Cys310, Cys297-Cys323, and Cys311-Cys326. A TB 1 domain is found at 286–338; the sequence is GYCFRELRGSECASPLPGLRTQEVCCRGEGLAWGVHDCHPCAEHLRNSNQVSG. N-linked (GlcNAc...) asparagine glycosylation occurs at Asn351. An EGF-like 2; calcium-binding domain is found at 356 to 396; it reads DVDECATGGRCQHGECANTRGGYTCVCPDGFLLDSSRSSCI. 7 disulfide bridges follow: Cys360–Cys371, Cys366–Cys380, Cys382–Cys395, Cys408–Cys430, Cys417–Cys443, Cys431–Cys446, and Cys432–Cys458. The TB 2 domain maps to 406–458; it reads GPCYRVLHDGGCSLPILRNITKQICCCSRVGKAWGRGCQLCPPYGSEGFREIC. Asn424 carries N-linked (GlcNAc...) asparagine glycosylation. The interval 473-590 is disordered; it reads YNTRPLNQDP…EIPESGPSSS (118 aa). A compositionally biased stretch (pro residues) spans 491 to 502; sequence RVPPATPRPPTG. Residues 521-561 show a composition bias toward basic and acidic residues; it reads PRPRPEPRPRPESRPRPEPRPRPEPRPQPESQPRPESRPRP. The segment covering 562 to 573 has biased composition (pro residues); sequence ESQPWPEFPLPS. The segment covering 579–590 has biased composition (low complexity); it reads GPEIPESGPSSS. The EGF-like 3 domain occupies 588 to 629; sequence SSSMCQRNPQVCGPGRCVPRPSGYTCACDPGFRLGPQGTRCI. 30 disulfides stabilise this stretch: Cys592-Cys604, Cys599-Cys613, Cys615-Cys628, Cys634-Cys646, Cys641-Cys655, Cys657-Cys670, Cys676-Cys688, Cys683-Cys697, Cys699-Cys712, Cys718-Cys730, Cys725-Cys739, Cys741-Cys750, Cys757-Cys769, Cys764-Cys778, Cys780-Cys793, Cys799-Cys811, Cys806-Cys820, Cys822-Cys835, Cys881-Cys893, Cys887-Cys902, Cys904-Cys918, Cys924-Cys936, Cys930-Cys945, Cys947-Cys960, Cys966-Cys977, Cys972-Cys986, Cys988-Cys1001, Cys1095-Cys1107, Cys1101-Cys1116, and Cys1118-Cys1131. The region spanning 630–671 is the EGF-like 4; calcium-binding domain; that stretch reads DIDECRRVPTPCAPGRCENTPGSFRCVCGTGFQAGPRATECL. In terms of domain architecture, EGF-like 5; calcium-binding spans 672 to 713; that stretch reads DVDECRRVPPPCDRGRCENTPGSFLCVCPAGYQAAPHGASCQ. Residues 714 to 751 enclose the EGF-like 6; calcium-binding domain; the sequence is DVDECTQSPGLCGRGVCENLPGSFRCVCPAGFRGSACE. The EGF-like 7; calcium-binding domain occupies 753–794; the sequence is DVDECAQQPPPCGPGRCDNTAGSFHCACPAGFRSRGPGAPCQ. An EGF-like 8; calcium-binding domain is found at 795–836; the sequence is DVDECSRSPSPCAYGRCENTEGSFKCVCPTGFQPNAAGSECE. Positions 877–919 constitute an EGF-like 9; calcium-binding domain; that stretch reads DVDECSSGTPCGLHGQCTNTKGSFHCSCSTGYRAPSGQPGPCA. The 42-residue stretch at 920 to 961 folds into the EGF-like 10; calcium-binding domain; the sequence is DINECLEGDFCFPHGECLNTDGSFTCTCAPGYRPGPRGASCL. One can recognise an EGF-like 11; calcium-binding domain in the interval 962-1002; that stretch reads DVDECSEEDLCQSGICTNTDGSFECICPPGHRAGPDLASCL. The EGF-like 12; calcium-binding domain occupies 1091-1132; the sequence is DVDECRNRSFCGAHAMCQNLPGSFQCVCDQGYEGARDGRHCV. Asn1097 carries N-linked (GlcNAc...) asparagine glycosylation. Residues 1171-1221 form a disordered region; that stretch reads TGRCVPPRAPAGTFPGSQPQAPASPSLPARPPAPPPPRRPSPPRQGPVSSG. Residues 1185–1197 show a composition bias toward low complexity; it reads PGSQPQAPASPSL. A compositionally biased stretch (pro residues) spans 1198-1215; sequence PARPPAPPPPRRPSPPRQ. Residues 1223–1277 enclose the TB 3 domain; sequence RECYFDTAAPDACDNILARNVTWQECCCTVGEGWGSGCRIQQCPGTETAEYQSLC. Cystine bridges form between Cys1225/Cys1248, Cys1235/Cys1260, Cys1249/Cys1265, Cys1250/Cys1277, Cys1299/Cys1312, Cys1307/Cys1321, Cys1323/Cys1336, Cys1342/Cys1354, Cys1349/Cys1363, and Cys1365/Cys1378. N-linked (GlcNAc...) asparagine glycosylation occurs at Asn1242. Residues 1295 to 1337 form the EGF-like 13; calcium-binding domain; sequence DVDECQLFQDQVCKSGVCVNTAPGYSCYCSNGFYYHAHRLECV. Residues 1338-1379 enclose the EGF-like 14; calcium-binding domain; sequence DNDECADEEPACEGGRCVNTVGSYHCTCEPPLVLDGSRRRCV. Asn1381 is a glycosylation site (N-linked (GlcNAc...) asparagine). The region spanning 1391–1444 is the TB 4 domain; it reads GVCWQEVGPDLVCSRPRLDRQATYTECCCLYGEAWGMDCALCPAQDSDDFEALC. 4 cysteine pairs are disulfide-bonded: Cys1393/Cys1417, Cys1403/Cys1429, Cys1418/Cys1432, and Cys1419/Cys1444. A compositionally biased stretch (pro residues) spans 1488 to 1500; it reads VLPYDPYPPPPGP. The segment at 1488-1566 is disordered; the sequence is VLPYDPYPPP…SSERGSYTGA (79 aa). Thr1564 carries the post-translational modification Phosphothreonine. EGF-like domains lie at 1575–1615 and 1616–1660; these read EAEE…MSCV and DVNE…HHCA. 6 disulfide bridges follow: Cys1579/Cys1590, Cys1585/Cys1599, Cys1601/Cys1614, Cys1620/Cys1635, Cys1630/Cys1644, and Cys1646/Cys1659.

Belongs to the LTBP family. As to quaternary structure, forms part of the large latent transforming growth factor beta precursor complex; removal is essential for activation of complex. Interacts with LTBP1 and TGFB1. Interacts with EFEMP2; this interaction promotes fibrillar deposition of EFEMP2. Post-translationally, contains hydroxylated asparagine residues.

The protein resides in the secreted. The protein localises to the extracellular space. It is found in the extracellular matrix. Functionally, key regulator of transforming growth factor beta (TGFB1, TGFB2 and TGFB3) that controls TGF-beta activation by maintaining it in a latent state during storage in extracellular space. Associates specifically via disulfide bonds with the Latency-associated peptide (LAP), which is the regulatory chain of TGF-beta, and regulates integrin-dependent activation of TGF-beta. The chain is Latent-transforming growth factor beta-binding protein 4 (Ltbp4) from Mus musculus (Mouse).